Consider the following 256-residue polypeptide: Imidazole glycerol phosphate synthase subunit HisF (256 aa).

Catalysis depends on residues aspartate 12 and aspartate 131.

It belongs to the HisA/HisF family. As to quaternary structure, heterodimer of HisH and HisF.

Its subcellular location is the cytoplasm. It catalyses the reaction 5-[(5-phospho-1-deoxy-D-ribulos-1-ylimino)methylamino]-1-(5-phospho-beta-D-ribosyl)imidazole-4-carboxamide + L-glutamine = D-erythro-1-(imidazol-4-yl)glycerol 3-phosphate + 5-amino-1-(5-phospho-beta-D-ribosyl)imidazole-4-carboxamide + L-glutamate + H(+). The protein operates within amino-acid biosynthesis; L-histidine biosynthesis; L-histidine from 5-phospho-alpha-D-ribose 1-diphosphate: step 5/9. Functionally, IGPS catalyzes the conversion of PRFAR and glutamine to IGP, AICAR and glutamate. The HisF subunit catalyzes the cyclization activity that produces IGP and AICAR from PRFAR using the ammonia provided by the HisH subunit. The sequence is that of Imidazole glycerol phosphate synthase subunit HisF from Pseudomonas fluorescens (strain SBW25).